The following is a 307-amino-acid chain: Thymidylate synthase (307 aa).

Arginine 44 lines the dUMP pocket. Serine 108 is subject to Phosphoserine. Residues 169–170 (RR), 189–190 (CH), 209–212 (RSGD), asparagine 220, and 250–252 (HIY) contribute to the dUMP site. Cysteine 189 (nucleophile) is an active-site residue. Residue aspartate 212 participates in (6R)-5,10-methylene-5,6,7,8-tetrahydrofolate binding. Glycyl lysine isopeptide (Lys-Gly) (interchain with G-Cter in SUMO2) cross-links involve residues lysine 286 and lysine 302. Alanine 306 provides a ligand contact to (6R)-5,10-methylene-5,6,7,8-tetrahydrofolate.

Belongs to the thymidylate synthase family. As to quaternary structure, homodimer.

Its subcellular location is the nucleus. It localises to the cytoplasm. The protein resides in the mitochondrion. It is found in the mitochondrion matrix. The protein localises to the mitochondrion inner membrane. It carries out the reaction dUMP + (6R)-5,10-methylene-5,6,7,8-tetrahydrofolate = 7,8-dihydrofolate + dTMP. It functions in the pathway pyrimidine metabolism; dTTP biosynthesis. Functionally, catalyzes the reductive methylation of 2'-deoxyuridine 5'-monophosphate (dUMP) to thymidine 5'-monophosphate (dTMP), using the cosubstrate, 5,10- methylenetetrahydrofolate (CH2H4folate) as a 1-carbon donor and reductant and contributes to the de novo mitochondrial thymidylate biosynthesis pathway. The sequence is that of Thymidylate synthase (Tyms) from Mus musculus (Mouse).